Consider the following 91-residue polypeptide: N(2)-fixation sustaining protein CowN (91 aa).

This sequence belongs to the CowN family.

In terms of biological role, is required to sustain N(2)-dependent growth in the presence of low levels of carbon monoxide (CO). Probably acts by protecting the N(2) fixation ability of the nitrogenase complex, which is inactivated in the presence of CO. The polypeptide is N(2)-fixation sustaining protein CowN (Gluconacetobacter diazotrophicus (strain ATCC 49037 / DSM 5601 / CCUG 37298 / CIP 103539 / LMG 7603 / PAl5)).